The primary structure comprises 211 residues: Thiamine-phosphate synthase (211 aa).

4-amino-2-methyl-5-(diphosphooxymethyl)pyrimidine-binding positions include 37–41 and asparagine 69; that span reads QLRIK. Mg(2+) contacts are provided by aspartate 70 and aspartate 89. Residue serine 108 coordinates 4-amino-2-methyl-5-(diphosphooxymethyl)pyrimidine. 134–136 contributes to the 2-[(2R,5Z)-2-carboxy-4-methylthiazol-5(2H)-ylidene]ethyl phosphate binding site; the sequence is TQT. Position 137 (lysine 137) interacts with 4-amino-2-methyl-5-(diphosphooxymethyl)pyrimidine. 2-[(2R,5Z)-2-carboxy-4-methylthiazol-5(2H)-ylidene]ethyl phosphate is bound by residues glycine 166 and 186 to 187; that span reads VS.

This sequence belongs to the thiamine-phosphate synthase family. It depends on Mg(2+) as a cofactor.

The catalysed reaction is 2-[(2R,5Z)-2-carboxy-4-methylthiazol-5(2H)-ylidene]ethyl phosphate + 4-amino-2-methyl-5-(diphosphooxymethyl)pyrimidine + 2 H(+) = thiamine phosphate + CO2 + diphosphate. It carries out the reaction 2-(2-carboxy-4-methylthiazol-5-yl)ethyl phosphate + 4-amino-2-methyl-5-(diphosphooxymethyl)pyrimidine + 2 H(+) = thiamine phosphate + CO2 + diphosphate. The enzyme catalyses 4-methyl-5-(2-phosphooxyethyl)-thiazole + 4-amino-2-methyl-5-(diphosphooxymethyl)pyrimidine + H(+) = thiamine phosphate + diphosphate. It functions in the pathway cofactor biosynthesis; thiamine diphosphate biosynthesis; thiamine phosphate from 4-amino-2-methyl-5-diphosphomethylpyrimidine and 4-methyl-5-(2-phosphoethyl)-thiazole: step 1/1. Condenses 4-methyl-5-(beta-hydroxyethyl)thiazole monophosphate (THZ-P) and 2-methyl-4-amino-5-hydroxymethyl pyrimidine pyrophosphate (HMP-PP) to form thiamine monophosphate (TMP). This is Thiamine-phosphate synthase from Shigella sonnei (strain Ss046).